A 149-amino-acid polypeptide reads, in one-letter code: Urease accessory protein UreE (149 aa).

Belongs to the UreE family.

It is found in the cytoplasm. Its function is as follows. Involved in urease metallocenter assembly. Binds nickel. Probably functions as a nickel donor during metallocenter assembly. The chain is Urease accessory protein UreE from Prochlorococcus marinus (strain AS9601).